The chain runs to 88 residues: uncharacterized protein (88 aa).

The dksA C4-type zinc-finger motif lies at 39–63; that stretch reads CEECGAPIPQARREAIPGVRLCIHC.

This is an uncharacterized protein from Escherichia coli (strain K12).